The primary structure comprises 198 residues: ATP-dependent Clp protease proteolytic subunit (198 aa).

Serine 102 (nucleophile) is an active-site residue. Histidine 127 is an active-site residue.

It belongs to the peptidase S14 family. In terms of assembly, fourteen ClpP subunits assemble into 2 heptameric rings which stack back to back to give a disk-like structure with a central cavity, resembling the structure of eukaryotic proteasomes.

Its subcellular location is the cytoplasm. It carries out the reaction Hydrolysis of proteins to small peptides in the presence of ATP and magnesium. alpha-casein is the usual test substrate. In the absence of ATP, only oligopeptides shorter than five residues are hydrolyzed (such as succinyl-Leu-Tyr-|-NHMec, and Leu-Tyr-Leu-|-Tyr-Trp, in which cleavage of the -Tyr-|-Leu- and -Tyr-|-Trp bonds also occurs).. Functionally, cleaves peptides in various proteins in a process that requires ATP hydrolysis. Has a chymotrypsin-like activity. Plays a major role in the degradation of misfolded proteins. The chain is ATP-dependent Clp protease proteolytic subunit from Brachyspira hyodysenteriae (strain ATCC 49526 / WA1).